The chain runs to 269 residues: Formamidopyrimidine-DNA glycosylase (269 aa).

Residue Pro-2 is the Schiff-base intermediate with DNA of the active site. Glu-3 functions as the Proton donor in the catalytic mechanism. The active-site Proton donor; for beta-elimination activity is the Lys-57. 3 residues coordinate DNA: His-90, Arg-109, and Lys-150. The segment at 235–269 adopts an FPG-type zinc-finger fold; sequence QVYGKGGKPCPRCDNPLSEMKIGQRASVFCSECQK. Arg-259 functions as the Proton donor; for delta-elimination activity in the catalytic mechanism.

Belongs to the FPG family. As to quaternary structure, monomer. Requires Zn(2+) as cofactor.

It catalyses the reaction Hydrolysis of DNA containing ring-opened 7-methylguanine residues, releasing 2,6-diamino-4-hydroxy-5-(N-methyl)formamidopyrimidine.. The catalysed reaction is 2'-deoxyribonucleotide-(2'-deoxyribose 5'-phosphate)-2'-deoxyribonucleotide-DNA = a 3'-end 2'-deoxyribonucleotide-(2,3-dehydro-2,3-deoxyribose 5'-phosphate)-DNA + a 5'-end 5'-phospho-2'-deoxyribonucleoside-DNA + H(+). Its function is as follows. Involved in base excision repair of DNA damaged by oxidation or by mutagenic agents. Acts as a DNA glycosylase that recognizes and removes damaged bases. Has a preference for oxidized purines, such as 7,8-dihydro-8-oxoguanine (8-oxoG). Has AP (apurinic/apyrimidinic) lyase activity and introduces nicks in the DNA strand. Cleaves the DNA backbone by beta-delta elimination to generate a single-strand break at the site of the removed base with both 3'- and 5'-phosphates. The sequence is that of Formamidopyrimidine-DNA glycosylase from Photobacterium profundum (strain SS9).